Consider the following 710-residue polypeptide: uncharacterized protein (710 aa).

Positions 1 to 20 are disordered; sequence MKQRQARLIGTPSQTRRQQE. Residues 13–42 adopt a coiled-coil conformation; it reads SQTRRQQELAEKLEKVKEVLEDEKKRQFNE.

Belongs to the IIV-6 268L family.

This is an uncharacterized protein from Invertebrate iridescent virus 6 (IIV-6).